A 263-amino-acid chain; its full sequence is Hydroxyacylglutathione hydrolase (263 aa).

7 residues coordinate Zn(2+): His56, His58, Asp60, His61, His115, Asp135, and His175.

The protein belongs to the metallo-beta-lactamase superfamily. Glyoxalase II family. As to quaternary structure, monomer. Zn(2+) serves as cofactor.

The enzyme catalyses an S-(2-hydroxyacyl)glutathione + H2O = a 2-hydroxy carboxylate + glutathione + H(+). It participates in secondary metabolite metabolism; methylglyoxal degradation; (R)-lactate from methylglyoxal: step 2/2. In terms of biological role, thiolesterase that catalyzes the hydrolysis of S-D-lactoyl-glutathione to form glutathione and D-lactic acid. The chain is Hydroxyacylglutathione hydrolase from Nitrosococcus oceani (strain ATCC 19707 / BCRC 17464 / JCM 30415 / NCIMB 11848 / C-107).